The primary structure comprises 193 residues: Cerebellin-1 (193 aa).

Positions 1 to 21 (MLGVVELLLLGAAWLAGPARG) are cleaved as a signal peptide. N23 carries N-linked (GlcNAc...) asparagine glycosylation. The essential for interaction with NRXN1 and linker of two C1q trimers into disulfide-linked hexamers stretch occupies residues 34–38 (CLVVC). In terms of domain architecture, C1q spans 57-193 (SGSAKVAFSA…TFSGFLVFPL (137 aa)). Residues 62–193 (VAFSAIRSTN…TFSGFLVFPL (132 aa)) form a necessary for interaction with CBLN3, and homotrimerization region. N79 is a glycosylation site (N-linked (GlcNAc...) asparagine). Residues 122 to 147 (YNRQTIQVSLMLNGWPVISAFAGDQD) form an essential for interaction with GRID2 region.

In terms of assembly, homohexamer; disulfide-linked homotrimers. The trimers are assembled via the globular C1q domains. The trimers associate via N-terminal cysteine residues to form disulfide-linked hexamers. May form oligomers with CBLN2, CBLN3 and CBLN4 prior to secretion. Once secreted, does not interact with other CBLN family members. Interacts with GRID1. Interacts with NRXN1 and NRXN2 long (alpha) and short (beta) isoforms produced by alternative promoter usage. Competes with NLGN1 for NRXN1-binding. Weakly interacts with NRXN3 short isoform and not at all with NRXN3 long isoform. Interacts (via C1q domain) with GRID2; GRID2-binding is calcium-independent; CBLN1 hexamers anchor GRID2 N-terminal domain dimers to monomeric NRXN1 isoform beta; promotes synaptogenesis and mediates the D-Serine-dependent long term depression signals and AMPA receptor endocytosis. Post-translationally, the proteolytic processing to yield cerebellin seems to occur either prior to the secretion by presynaptic neurons and subsequent oligomerization or in some other location after release of the mature protein. In terms of processing, sialoglycoprotein.

The protein localises to the secreted. The protein resides in the postsynaptic cell membrane. Required for synapse integrity and synaptic plasticity. During cerebellar synapse formation, essential for the matching and maintenance of pre- and post-synaptic elements at parallel fiber-Purkinje cell synapses, the establishment of the proper pattern of climbing fiber-Purkinje cell innervation, and induction of long-term depression at parallel fiber-Purkinje cell synapses. Plays a role as a synaptic organizer that acts bidirectionally on both pre- and post-synaptic components. On the one hand induces accumulation of synaptic vesicles in the pre-synaptic part by binding with NRXN1 and in other hand induces clustering of GRID2 and its associated proteins at the post-synaptic site through association of GRID2. NRXN1-CBLN1-GRID2 complex directly induces parallel fiber protrusions that encapsulate spines of Purkinje cells leading to accumulation of GRID2 and synaptic vesicles. Required for CBLN3 export from the endoplasmic reticulum and secretion. NRXN1-CBLN1-GRID2 complex mediates the D-Serine-dependent long term depression signals and AMPA receptor endocytosis. Essential for long-term maintenance but not establishment of excitatory synapses. Inhibits the formation and function of inhibitory GABAergic synapses in cerebellar Purkinje cells. Its function is as follows. The cerebellin peptide exerts neuromodulatory functions. Directly stimulates norepinephrine release via the adenylate cyclase/PKA-dependent signaling pathway; and indirectly enhances adrenocortical secretion in vivo, through a paracrine mechanism involving medullary catecholamine release. The protein is Cerebellin-1 of Bos taurus (Bovine).